The chain runs to 20 residues: Collagenolytic protease 36 kDa C (20 aa).

The region spanning 1–20 is the Peptidase S1 domain; it reads IVGGSEATSGQFPYQXSFQD. The tract at residues 1–20 is disordered; it reads IVGGSEATSGQFPYQXSFQD.

Belongs to the peptidase S1 family.

It catalyses the reaction Hydrolysis of proteins, with broad specificity for peptide bonds. Native collagen is cleaved about 75% of the length of the molecule from the N-terminus. Low activity on small molecule substrates of both trypsin and chymotrypsin.. This enzyme is a serine protease capable of degrading the native triple helix of collagen. This Paralithodes camtschaticus (Red king crab) protein is Collagenolytic protease 36 kDa C.